The following is a 243-amino-acid chain: Bidirectional sugar transporter SWEET2a (243 aa).

An N-terminal signal peptide occupies residues 1 to 15 (MMNALGLSVAATSTG). Residues 16 to 24 (SPFHDVCCY) are Extracellular-facing. Residues 25 to 45 (GAGIAGNIFALVLFISPLPTF) form a helical membrane-spanning segment. One can recognise a MtN3/slv 1 domain in the interval 27–112 (GIAGNIFALV…ATFIAFADAK (86 aa)). Topologically, residues 46–56 (KRIVRNGSTEQ) are cytoplasmic. The helical transmembrane segment at 57-79 (FSAMPYIYSLLNCLICLWYGLPF) threads the bilayer. At 80–90 (VSYGVVLVATV) the chain is on the extracellular side. The chain crosses the membrane as a helical span at residues 91-111 (NSIGALFQLAYTATFIAFADA). Over 112–118 (KNRVKVS) the chain is Cytoplasmic. The chain crosses the membrane as a helical span at residues 119-139 (SLLVMVFGVFALIVYVSLALF). At 140 to 146 (DHQTRQL) the chain is on the extracellular side. A helical membrane pass occupies residues 147-167 (FVGYLSVASLIFMFASPLSII). Residues 147 to 229 (FVGYLSVASL…QLVLYGYFRK (83 aa)) form the MtN3/slv 2 domain. Over 168-180 (NLVIRTKSVEYMP) the chain is Cytoplasmic. Residues 181–201 (FYLSLSMFLMSVSFFAYGVLL) traverse the membrane as a helical segment. Residues 202–203 (HD) lie on the Extracellular side of the membrane. A helical transmembrane segment spans residues 204–224 (FFIYIPNGIGTVLGVIQLVLY). The Cytoplasmic segment spans residues 225 to 243 (GYFRKGSREDSLPLLVTHT).

Belongs to the SWEET sugar transporter family. As to quaternary structure, forms homooligomers and/or heterooligomers.

It localises to the cell membrane. Its function is as follows. Mediates both low-affinity uptake and efflux of sugar across the plasma membrane. This is Bidirectional sugar transporter SWEET2a (SWEET2A) from Oryza sativa subsp. indica (Rice).